The primary structure comprises 368 residues: tRNA/tmRNA (uracil-C(5))-methyltransferase (368 aa).

Gln-190, Tyr-218, Asn-223, Glu-239, and Asp-301 together coordinate S-adenosyl-L-methionine. The active-site Nucleophile is the Cys-326. Residue Glu-360 is the Proton acceptor of the active site.

This sequence belongs to the class I-like SAM-binding methyltransferase superfamily. RNA M5U methyltransferase family. TrmA subfamily.

The enzyme catalyses uridine(54) in tRNA + S-adenosyl-L-methionine = 5-methyluridine(54) in tRNA + S-adenosyl-L-homocysteine + H(+). The catalysed reaction is uridine(341) in tmRNA + S-adenosyl-L-methionine = 5-methyluridine(341) in tmRNA + S-adenosyl-L-homocysteine + H(+). Dual-specificity methyltransferase that catalyzes the formation of 5-methyluridine at position 54 (m5U54) in all tRNAs, and that of position 341 (m5U341) in tmRNA (transfer-mRNA). The sequence is that of tRNA/tmRNA (uracil-C(5))-methyltransferase from Photobacterium profundum (strain SS9).